The chain runs to 123 residues: WAP four-disulfide core domain protein 2 (123 aa).

An N-terminal signal peptide occupies residues 1–26; it reads MPACRLGLLVASLLLGLLLGLPPVTG. 2 consecutive WAP domains span residues 28-69 and 72-122; these read GAEK…VTIC and PNEK…VTPV. Intrachain disulfides connect Cys35-Cys61, Cys44-Cys65, Cys48-Cys60, Cys54-Cys69, Cys79-Cys109, Cys92-Cys113, Cys96-Cys108, and Cys102-Cys118.

Homotrimer; disulfide-linked. As to expression, detected in the distal parts of the epididymis.

It localises to the secreted. Broad range protease inhibitor. The sequence is that of WAP four-disulfide core domain protein 2 (WFDC2) from Sus scrofa (Pig).